The chain runs to 130 residues: Protein ApaG (130 aa).

Positions 3 to 127 (SAVTRGIEVT…FSLDVPEQRR (125 aa)) constitute an ApaG domain.

The sequence is that of Protein ApaG from Brucella canis (strain ATCC 23365 / NCTC 10854 / RM-666).